The sequence spans 430 residues: Histidine--tRNA ligase (430 aa).

The protein belongs to the class-II aminoacyl-tRNA synthetase family. In terms of assembly, homodimer.

It is found in the cytoplasm. The enzyme catalyses tRNA(His) + L-histidine + ATP = L-histidyl-tRNA(His) + AMP + diphosphate + H(+). This is Histidine--tRNA ligase from Gloeothece citriformis (strain PCC 7424) (Cyanothece sp. (strain PCC 7424)).